The sequence spans 431 residues: Hemagglutinin-esterase (431 aa).

The signal sequence occupies residues 1 to 21; that stretch reads MARTDAMAPRTLLLVLSLGYA. The tract at residues 11–131 is esterase domain 1; the sequence is TLLLVLSLGY…DNNRWMGNKA (121 aa). The Virion surface portion of the chain corresponds to 22–399; it reads FGFNEPLNVV…PVCMYDPLPV (378 aa). Ser-44 functions as the Nucleophile in the catalytic mechanism. A disulfide bridge connects residues Cys-48 and Cys-69. N-linked (GlcNAc...) asparagine; by host glycosylation is found at Asn-53, Asn-93, Asn-151, Asn-157, Asn-199, Asn-244, Asn-248, and Asn-309. Cysteines 117 and 166 form a disulfide. Residues 132–274 are receptor binding; sequence RFYTQLYQKM…GNYISISNEL (143 aa). Cystine bridges form between Cys-205–Cys-284 and Cys-213–Cys-257. The tract at residues 275–387 is esterase domain 2; it reads LLTVPSKAIC…HCPTAANIVF (113 aa). Cysteines 315 and 320 form a disulfide. Asn-324 carries an N-linked (GlcNAc...) asparagine; by host glycan. Active-site charge relay system residues include Asp-334 and His-337. N-linked (GlcNAc...) asparagine; by host glycosylation is found at Asn-352 and Asn-366. Cysteines 355 and 379 form a disulfide. Residues 400–420 traverse the membrane as a helical segment; that stretch reads ILLGVLLGIAVLIIVFLMFYF. The Intravirion segment spans residues 421 to 431; the sequence is MTDSGVRLHEA.

The protein belongs to the influenza type C/coronaviruses hemagglutinin-esterase family. Homodimer; disulfide-linked. Forms a complex with the M protein in the pre-Golgi. Associates then with S-M complex to form a ternary complex S-M-HE. Post-translationally, N-glycosylated in the host RER.

Its subcellular location is the virion membrane. It is found in the host cell membrane. The enzyme catalyses N-acetyl-9-O-acetylneuraminate + H2O = N-acetylneuraminate + acetate + H(+). It catalyses the reaction N-acetyl-4-O-acetylneuraminate + H2O = N-acetylneuraminate + acetate + H(+). Functionally, structural protein that makes short spikes at the surface of the virus. Contains receptor binding and receptor-destroying activities. Mediates de-O-acetylation of N-acetyl-4-O-acetylneuraminic acid, which is probably the receptor determinant recognized by the virus on the surface of erythrocytes and susceptible cells. This receptor-destroying activity is important for virus release as it probably helps preventing self-aggregation and ensures the efficient spread of the progeny virus from cell to cell. May serve as a secondary viral attachment protein for initiating infection, the spike protein being the major one. May become a target for both the humoral and the cellular branches of the immune system. The sequence is that of Hemagglutinin-esterase from Murine coronavirus (strain DVIM) (MHV-DVIM).